Consider the following 64-residue polypeptide: MISAKSKTKRITITFEIPEDIDAKKFKDDVKRYVRYKLLANKLYELLEGENIEEIEEEIRKRRE.

In terms of biological role, possibly the antitoxin component of a type II toxin-antitoxin (TA) system. Its cognate toxin is VapC1 (Potential). The protein is Putative antitoxin VapB1 (vapB1) of Methanocaldococcus jannaschii (strain ATCC 43067 / DSM 2661 / JAL-1 / JCM 10045 / NBRC 100440) (Methanococcus jannaschii).